A 227-amino-acid polypeptide reads, in one-letter code: Orotate phosphoribosyltransferase (227 aa).

K34 is a binding site for 5-phospho-alpha-D-ribose 1-diphosphate. An orotate-binding site is contributed by 42-43; sequence FF. 5-phospho-alpha-D-ribose 1-diphosphate contacts are provided by residues 80–81, R106, K107, K110, H112, and 131–139; these read YK and DDVISAGTS. Orotate contacts are provided by S135 and R163.

It belongs to the purine/pyrimidine phosphoribosyltransferase family. PyrE subfamily. In terms of assembly, homodimer. The cofactor is Mg(2+).

The enzyme catalyses orotidine 5'-phosphate + diphosphate = orotate + 5-phospho-alpha-D-ribose 1-diphosphate. Its pathway is pyrimidine metabolism; UMP biosynthesis via de novo pathway; UMP from orotate: step 1/2. Catalyzes the transfer of a ribosyl phosphate group from 5-phosphoribose 1-diphosphate to orotate, leading to the formation of orotidine monophosphate (OMP). In Cupriavidus necator (strain ATCC 17699 / DSM 428 / KCTC 22496 / NCIMB 10442 / H16 / Stanier 337) (Ralstonia eutropha), this protein is Orotate phosphoribosyltransferase.